The chain runs to 918 residues: E3 ubiquitin-protein ligase CBL-B-A (918 aa).

A compositionally biased stretch (low complexity) spans Met1–Gly18. The disordered stretch occupies residues Met1–Asn27. Residues Pro46 to Gln178 are 4H. The Cbl-PTB domain occupies Pro46–Gly354. The segment at Gly179–Phe251 is EF-hand-like. The Ca(2+) site is built by Asp232, Thr234, Asn236, Tyr238, and Glu243. An SH2-like region spans residues Gln252–Gly354. Arg297 contacts 4-O-phospho-L-tyrosine. The linker stretch occupies residues Leu355–Leu383. Residues Cys384–Arg423 form an RING-type zinc finger. Disordered regions lie at residues Asn481–Arg582, Phe780–Arg831, and His857–Thr918. Positions Arg483–Ser497 are enriched in polar residues. 2 stretches are compositionally biased toward pro residues: residues Leu554–Pro576 and Pro821–Ala830. Positions Lys898–Thr918 are enriched in polar residues.

Interacts with several SH3 domain-containing proteins and with poly-ubiquitinated proteins.

It is found in the cytoplasm. The catalysed reaction is S-ubiquitinyl-[E2 ubiquitin-conjugating enzyme]-L-cysteine + [acceptor protein]-L-lysine = [E2 ubiquitin-conjugating enzyme]-L-cysteine + N(6)-ubiquitinyl-[acceptor protein]-L-lysine.. The protein operates within protein modification; protein ubiquitination. Its function is as follows. E3 ubiquitin-protein ligase which accepts ubiquitin from specific E2 ubiquitin-conjugating enzymes, and transfers it to substrates, generally promoting their degradation by the proteasome. The polypeptide is E3 ubiquitin-protein ligase CBL-B-A (cblb-a) (Xenopus laevis (African clawed frog)).